Reading from the N-terminus, the 172-residue chain is Large ribosomal subunit protein uL10 (172 aa).

It belongs to the universal ribosomal protein uL10 family. As to quaternary structure, part of the ribosomal stalk of the 50S ribosomal subunit. The N-terminus interacts with L11 and the large rRNA to form the base of the stalk. The C-terminus forms an elongated spine to which L12 dimers bind in a sequential fashion forming a multimeric L10(L12)X complex.

Functionally, forms part of the ribosomal stalk, playing a central role in the interaction of the ribosome with GTP-bound translation factors. This is Large ribosomal subunit protein uL10 from Nitrobacter winogradskyi (strain ATCC 25391 / DSM 10237 / CIP 104748 / NCIMB 11846 / Nb-255).